The following is a 1067-amino-acid chain: SURP and G-patch domain-containing protein 2 (1067 aa).

At Ser-93 the chain carries Phosphoserine. Residues 177 to 189 are compositionally biased toward basic and acidic residues; sequence KESRDYDLDHPGE. A disordered region spans residues 177 to 199; the sequence is KESRDYDLDHPGEVDSVSRSSGQ. Residue Ser-206 is modified to Phosphoserine. Lys-219 is covalently cross-linked (Glycyl lysine isopeptide (Lys-Gly) (interchain with G-Cter in SUMO2)). Thr-265 bears the Phosphothreonine mark. Phosphoserine is present on residues Ser-267 and Ser-586. An SURP motif 1 repeat occupies 573–616; sequence IDQLVMRVIQGRLSPRERTLLLQDPAYWFLSDESSLEYKYYKLK. The interval 668-767 is disordered; that stretch reads SQGPRGLKAK…CPSANMDAKT (100 aa). The span at 680 to 691 shows a compositional bias: polar residues; that stretch reads TTAQQTSLSSGT. Ser-740 carries the post-translational modification Phosphoserine. Thr-744 carries the post-translational modification Phosphothreonine. Residues 770-813 form an SURP motif 2 repeat; it reads TAEKLARFVAQVGPEIEQFSIENSTDNPDLWFLHDQSSSAFKFY. The segment covering 825–840 has biased composition (polar residues); sequence SFQSTGEAGDSVQSPT. Disordered stretches follow at residues 825–944 and 967–991; these read SFQS…KSLK and RIAYDRPRGRPIAKKKKPKDMEFSQ. Position 838 is a phosphoserine (Ser-838). Over residues 843-856 the composition is skewed to basic and acidic residues; sequence KEGKGEPQEGHPEQ. Acidic residues predominate over residues 866-883; sequence LPEEEEEDEEESEDEGGE. Polar residues predominate over residues 919–931; sequence ASTPGLSQASSGS. Over residues 975-984 the composition is skewed to basic residues; sequence GRPIAKKKKP. Positions 980–985 match the Nuclear localization signal motif; that stretch reads KKKKPK. A G-patch domain is found at 996–1042; it reads DKNVGFQMLQKMGWKEGHGLGSLGKGIREPVSVGALSEGEGLGADGP.

The protein resides in the nucleus. Its function is as follows. May play a role in mRNA splicing. In Mus musculus (Mouse), this protein is SURP and G-patch domain-containing protein 2 (Sugp2).